The chain runs to 389 residues: Ethanolamine-phosphate cytidylyltransferase (389 aa).

CTP contacts are provided by residues 221-222 (AF), 229-232 (HVDF), Lys-259, 307-310 (HGKT), and 336-340 (SGNDL). Phosphothreonine occurs at positions 341 and 342.

Belongs to the cytidylyltransferase family.

It catalyses the reaction phosphoethanolamine + CTP + H(+) = CDP-ethanolamine + diphosphate. It participates in phospholipid metabolism; phosphatidylethanolamine biosynthesis; phosphatidylethanolamine from ethanolamine: step 2/3. Functionally, ethanolamine-phosphate cytidylyltransferase that catalyzes the second step in the synthesis of phosphatidylethanolamine (PE) from ethanolamine via the CDP-ethanolamine pathway. Phosphatidylethanolamine is a dominant inner-leaflet phospholipid in cell membranes, where it plays a role in membrane function by structurally stabilizing membrane-anchored proteins, and participates in important cellular processes such as cell division, cell fusion, blood coagulation, and apoptosis. This is Ethanolamine-phosphate cytidylyltransferase (PCYT2) from Bos taurus (Bovine).